Reading from the N-terminus, the 215-residue chain is Probable transaldolase (215 aa).

The Schiff-base intermediate with substrate role is filled by Lys83.

This sequence belongs to the transaldolase family. Type 3B subfamily.

It localises to the cytoplasm. The enzyme catalyses D-sedoheptulose 7-phosphate + D-glyceraldehyde 3-phosphate = D-erythrose 4-phosphate + beta-D-fructose 6-phosphate. It functions in the pathway carbohydrate degradation; pentose phosphate pathway; D-glyceraldehyde 3-phosphate and beta-D-fructose 6-phosphate from D-ribose 5-phosphate and D-xylulose 5-phosphate (non-oxidative stage): step 2/3. In terms of biological role, transaldolase is important for the balance of metabolites in the pentose-phosphate pathway. This chain is Probable transaldolase, found in Methanococcus maripaludis (strain C7 / ATCC BAA-1331).